We begin with the raw amino-acid sequence, 465 residues long: Soluble pyridine nucleotide transhydrogenase (465 aa).

An FAD-binding site is contributed by 35 to 44; that stretch reads ERYNNVGGGC.

It belongs to the class-I pyridine nucleotide-disulfide oxidoreductase family. The cofactor is FAD.

It localises to the cytoplasm. The enzyme catalyses NAD(+) + NADPH = NADH + NADP(+). Its function is as follows. Conversion of NADPH, generated by peripheral catabolic pathways, to NADH, which can enter the respiratory chain for energy generation. The chain is Soluble pyridine nucleotide transhydrogenase from Photorhabdus laumondii subsp. laumondii (strain DSM 15139 / CIP 105565 / TT01) (Photorhabdus luminescens subsp. laumondii).